The chain runs to 413 residues: Serine hydroxymethyltransferase (413 aa).

(6S)-5,6,7,8-tetrahydrofolate contacts are provided by residues Leu117 and 121–123 (GHL). Position 226 is an N6-(pyridoxal phosphate)lysine (Lys226). (6S)-5,6,7,8-tetrahydrofolate-binding positions include Glu239 and 349 to 351 (SPF).

Belongs to the SHMT family. As to quaternary structure, homodimer. Pyridoxal 5'-phosphate is required as a cofactor.

The protein resides in the cytoplasm. It catalyses the reaction (6R)-5,10-methylene-5,6,7,8-tetrahydrofolate + glycine + H2O = (6S)-5,6,7,8-tetrahydrofolate + L-serine. The protein operates within one-carbon metabolism; tetrahydrofolate interconversion. It functions in the pathway amino-acid biosynthesis; glycine biosynthesis; glycine from L-serine: step 1/1. Catalyzes the reversible interconversion of serine and glycine with tetrahydrofolate (THF) serving as the one-carbon carrier. This reaction serves as the major source of one-carbon groups required for the biosynthesis of purines, thymidylate, methionine, and other important biomolecules. Also exhibits THF-independent aldolase activity toward beta-hydroxyamino acids, producing glycine and aldehydes, via a retro-aldol mechanism. The polypeptide is Serine hydroxymethyltransferase (Bacillus anthracis (strain A0248)).